Consider the following 560-residue polypeptide: CTP synthase (560 aa).

The interval Met1 to Met272 is amidoligase domain. CTP is bound at residue Ser20. Ser20 is a UTP binding site. ATP-binding positions include Ser21 to Leu26 and Asp78. Mg(2+)-binding residues include Asp78 and Glu146. Residues Asp153–Glu155, Lys193–Gln198, and Lys229 each bind CTP. Residues Lys193–Gln198 and Lys229 each bind UTP. The Glutamine amidotransferase type-1 domain occupies Thr297 to Arg539. An L-glutamine-binding site is contributed by Gly356. Cys383 functions as the Nucleophile; for glutamine hydrolysis in the catalytic mechanism. Residues Met384 to Gln387, Glu407, and Arg467 contribute to the L-glutamine site. Catalysis depends on residues His512 and Glu514.

This sequence belongs to the CTP synthase family. Homotetramer.

It carries out the reaction UTP + L-glutamine + ATP + H2O = CTP + L-glutamate + ADP + phosphate + 2 H(+). It catalyses the reaction L-glutamine + H2O = L-glutamate + NH4(+). The enzyme catalyses UTP + NH4(+) + ATP = CTP + ADP + phosphate + 2 H(+). It participates in pyrimidine metabolism; CTP biosynthesis via de novo pathway; CTP from UDP: step 2/2. Its activity is regulated as follows. Allosterically activated by GTP, when glutamine is the substrate; GTP has no effect on the reaction when ammonia is the substrate. The allosteric effector GTP functions by stabilizing the protein conformation that binds the tetrahedral intermediate(s) formed during glutamine hydrolysis. Inhibited by the product CTP, via allosteric rather than competitive inhibition. Its function is as follows. Catalyzes the ATP-dependent amination of UTP to CTP with either L-glutamine or ammonia as the source of nitrogen. Regulates intracellular CTP levels through interactions with the four ribonucleotide triphosphates. The sequence is that of CTP synthase from Anaplasma marginale (strain Florida).